The sequence spans 227 residues: MAYPLQLGFQDATSPVMEELLHFHDHTLMIIFLISSLVLYIIMLMLTTKLVHTNMMNVQEMEMIWTILPAIILILIALPSLHTLYMMDEINNPLLTIKTMGHQWFWSYEYTDYEDLAFDSYMITTDSLKFGELRLLEVDNRMVLPTDLPVRVLVSSEDVLHSWAVPSLGLKTDAIPGRLNQVTLTSMRPGLFYGQCSEICGANHSFMPIVLELVPLKYFESWSASLA.

The Mitochondrial intermembrane segment spans residues 1–14 (MAYPLQLGFQDATS). Residues 15–45 (PVMEELLHFHDHTLMIIFLISSLVLYIIMLM) traverse the membrane as a helical segment. Residues 46 to 59 (LTTKLVHTNMMNVQ) lie on the Mitochondrial matrix side of the membrane. A helical membrane pass occupies residues 60-87 (EMEMIWTILPAIILILIALPSLHTLYMM). At 88–227 (DEINNPLLTI…YFESWSASLA (140 aa)) the chain is on the mitochondrial intermembrane side. Cu cation contacts are provided by H161, C196, E198, C200, H204, and M207. Mg(2+) is bound at residue E198. At Y218 the chain carries Phosphotyrosine.

The protein belongs to the cytochrome c oxidase subunit 2 family. As to quaternary structure, component of the cytochrome c oxidase (complex IV, CIV), a multisubunit enzyme composed of 14 subunits. The complex is composed of a catalytic core of 3 subunits MT-CO1, MT-CO2 and MT-CO3, encoded in the mitochondrial DNA, and 11 supernumerary subunits COX4I, COX5A, COX5B, COX6A, COX6B, COX6C, COX7A, COX7B, COX7C, COX8 and NDUFA4, which are encoded in the nuclear genome. The complex exists as a monomer or a dimer and forms supercomplexes (SCs) in the inner mitochondrial membrane with NADH-ubiquinone oxidoreductase (complex I, CI) and ubiquinol-cytochrome c oxidoreductase (cytochrome b-c1 complex, complex III, CIII), resulting in different assemblies (supercomplex SCI(1)III(2)IV(1) and megacomplex MCI(2)III(2)IV(2)). Found in a complex with TMEM177, COA6, COX18, COX20, SCO1 and SCO2. Interacts with TMEM177 in a COX20-dependent manner. Interacts with COX20. Interacts with COX16. Requires Cu cation as cofactor.

Its subcellular location is the mitochondrion inner membrane. The enzyme catalyses 4 Fe(II)-[cytochrome c] + O2 + 8 H(+)(in) = 4 Fe(III)-[cytochrome c] + 2 H2O + 4 H(+)(out). Component of the cytochrome c oxidase, the last enzyme in the mitochondrial electron transport chain which drives oxidative phosphorylation. The respiratory chain contains 3 multisubunit complexes succinate dehydrogenase (complex II, CII), ubiquinol-cytochrome c oxidoreductase (cytochrome b-c1 complex, complex III, CIII) and cytochrome c oxidase (complex IV, CIV), that cooperate to transfer electrons derived from NADH and succinate to molecular oxygen, creating an electrochemical gradient over the inner membrane that drives transmembrane transport and the ATP synthase. Cytochrome c oxidase is the component of the respiratory chain that catalyzes the reduction of oxygen to water. Electrons originating from reduced cytochrome c in the intermembrane space (IMS) are transferred via the dinuclear copper A center (CU(A)) of subunit 2 and heme A of subunit 1 to the active site in subunit 1, a binuclear center (BNC) formed by heme A3 and copper B (CU(B)). The BNC reduces molecular oxygen to 2 water molecules using 4 electrons from cytochrome c in the IMS and 4 protons from the mitochondrial matrix. In Mammuthus primigenius (Siberian woolly mammoth), this protein is Cytochrome c oxidase subunit 2 (MT-CO2).